We begin with the raw amino-acid sequence, 414 residues long: Aspartic protease-like protein pynH (414 aa).

The signal sequence occupies residues 1-19 (MFPCSRIWSLLVAAATASA). Positions 43–410 (FLTDIALGTP…DFEKLQVGIA (368 aa)) constitute a Peptidase A1 domain. N-linked (GlcNAc...) asparagine glycans are attached at residues asparagine 93, asparagine 102, asparagine 140, asparagine 151, asparagine 173, asparagine 202, asparagine 221, asparagine 258, asparagine 272, asparagine 335, and asparagine 366. Cysteine 333 and cysteine 371 are joined by a disulfide.

It belongs to the peptidase A1 family.

It participates in secondary metabolite biosynthesis. In terms of biological role, aspartic protease-like protein; part of the gene cluster that mediates the biosynthesis of pyranonigrins, a family of antioxidative compounds. The first step of pyranonigrins biosynthesis is performed by the hybrid PKS-NRPS synthetase that condenses 6 malonyl-CoA units to an acetyl starter unit, to form a 1,3,5-trioxotetradecane-6,8-dienyl-ACP. The enoyl reductase (ER) domain of pynA is likely to be functional during the first two rounds of polyketide chain extension, to generate the saturated C-C bonds of the alkyl side chain. PynA subsequently forms the amide bond between the acyl chain and L-serine. Although pynA has a terminal reductase domain, it appears to require the thioesterase pynI for the release of the straight-chain intermediate from pynA via the formation of a tetramic acid pyranonigrin J. The methyltransferase pynC then coverts pyranonigrin J to pyranonigrin I via N-methylation. The FAD-dependent monooxygenase pynG catalyzes an epoxidation-mediated cyclization to form the dihydro-gamma-pyrone moiety, followed by pynD-catalyzed oxidation of the alcohol to the ketone and enolization to yield the characteristic tetramic acid-fused gamma-pyrone core of pyranonigrin H. Pyranonigrin H is substrate of pynH for dehydration-mediated exo-methylene formation from the serine side chain to produce pyranonigrin E, before the oxidase pynE reduces the exo-methylene of pyranonigrin E into a pendant methyl to form pyranonigrin G. The FAD-linked oxidoreductase pynB performs the reverse reaction and converts pyranonigrin G back to pyranonigrin E. In Aspergillus niger (strain ATCC MYA-4892 / CBS 513.88 / FGSC A1513), this protein is Aspartic protease-like protein pynH.